A 701-amino-acid chain; its full sequence is MSGRRKGCSAATASSSSSSPPSRLPPLPGHARRPRRKRCLVPEVFCTRDLADLCVRRDYEGLRRYLRRFEGSCVSLGWPSQCIYVVGGEHSPHSLTEIDLEHCQNDFFGEFRALHLIGTVSHATCRYQVFVDAYGAVFAYDAQEDCLYELASDLAGFFAKGMIRCDPVHESICARLQPNVPLVHPDHRAELCRRSRASARGRYLRSLLAFRELLACEDTAARCAYVEAHREAQLTLIWPEKHSLVLRTARDLGLSASMLRRFQRSLYTREPVMPLGEIEGAEDKTFFHRVRILCGDTGTVYAALVGQDKLVRLARDLRGFVRVGLALLIDDFRYESIGPVDRSSLYEANPELRLPFKKRRLVVGYFDSLSSLYLRGQPKFSSIWRGLRDAWTHKRPKPRERASGVHLQRYVRATAGRWLPLCWPPLHGIMLGDTQYFGVVRDHKTYRRFSCLRQAGRLYFIGLVSVYECVPDANTAPEIWVSGHGHAFAYLPGEDKVYVLGLSFGEFFENGLFAVYSFFERDYVDEIVEGAWFKHTFAGMYELSQILHDRANLLRVCQLHAGSKIRLGGSPACTFTFGSWNVAEADEANNFVIGVLEQAHFVVIGWMEPVNKAVFMDAHGGIHVLLYGTMLVKLAETLRGFIRQGSFWFRCPRRFCFSPLDSSATVAAKPVSSHTSPAYDVSEYVFSGRSVLDSVSGTGAS.

The interval 1-33 (MSGRRKGCSAATASSSSSSPPSRLPPLPGHARR) is disordered.

It belongs to the herpesviridae US22 family. As to quaternary structure, interacts with UL38 and host HDAC1; these interactions are necessary for the HDAC1 interaction with UL38. Interacts with host MTA2.

It is found in the virion. It localises to the host nucleus. Its subcellular location is the host cytoplasm. In terms of biological role, contributes to activation of immediate-early gene expression. The protein is Protein UL29/UL28 (UL29) of Homo sapiens (Human).